Here is a 615-residue protein sequence, read N- to C-terminus: Aldehyde oxidase GLOX1 (615 aa).

Positions 1-25 are cleaved as a signal peptide; it reads MKKSTRLLWLLSIIVLVAAVSKAVA. Asn35 is a glycosylation site (N-linked (GlcNAc...) asparagine). Residues 70-89 form a disordered region; sequence PPKAGKGKGKGKGRGTVAAG. Positions 72–82 are enriched in basic residues; it reads KAGKGKGKGKG. 2 N-linked (GlcNAc...) asparagine glycosylation sites follow: Asn187 and Asn297.

The protein localises to the secreted. It carries out the reaction an aldehyde + O2 + H2O = a carboxylate + H2O2 + H(+). Its function is as follows. Catalyzes the oxidation of aldehydes to the corresponding carboxylate by coupling the reaction to the reduction of dioxygen to hydrogen peroxide. Substrates include glyoxal and other aldehydes. May be regulated by the transcription factor MYB80 during anther development and play a role in tapetum and pollen development. The protein is Aldehyde oxidase GLOX1 of Arabidopsis thaliana (Mouse-ear cress).